The primary structure comprises 284 residues: Shikimate dehydrogenase (NADP(+)) (284 aa).

Shikimate-binding positions include 23–25 (SLS) and Thr-70. Lys-74 functions as the Proton acceptor in the catalytic mechanism. Glu-86 contributes to the NADP(+) binding site. Shikimate-binding residues include Asn-95 and Asp-111. NADP(+) is bound by residues 135-139 (GAGGA), 159-164 (NRTPGR), and Ala-227. Tyr-229 provides a ligand contact to shikimate. Gly-251 provides a ligand contact to NADP(+).

The protein belongs to the shikimate dehydrogenase family. As to quaternary structure, homodimer.

It catalyses the reaction shikimate + NADP(+) = 3-dehydroshikimate + NADPH + H(+). Its pathway is metabolic intermediate biosynthesis; chorismate biosynthesis; chorismate from D-erythrose 4-phosphate and phosphoenolpyruvate: step 4/7. Its function is as follows. Involved in the biosynthesis of the chorismate, which leads to the biosynthesis of aromatic amino acids. Catalyzes the reversible NADPH linked reduction of 3-dehydroshikimate (DHSA) to yield shikimate (SA). This chain is Shikimate dehydrogenase (NADP(+)), found in Rubrobacter xylanophilus (strain DSM 9941 / JCM 11954 / NBRC 16129 / PRD-1).